Consider the following 278-residue polypeptide: Potassium/proton antiporter CemA (278 aa).

The next 4 membrane-spanning stretches (helical) occupy residues Y60 to F80, A155 to T175, F201 to V221, and I239 to F259.

It belongs to the CemA family.

It localises to the plastid. Its subcellular location is the chloroplast inner membrane. It carries out the reaction K(+)(in) + H(+)(out) = K(+)(out) + H(+)(in). Functionally, contributes to K(+)/H(+) antiport activity by supporting proton efflux to control proton extrusion and homeostasis in chloroplasts in a light-dependent manner to modulate photosynthesis. Prevents excessive induction of non-photochemical quenching (NPQ) under continuous-light conditions. Indirectly promotes efficient inorganic carbon uptake into chloroplasts. This Rhodomonas salina (Cryptomonas salina) protein is Potassium/proton antiporter CemA.